We begin with the raw amino-acid sequence, 240 residues long: Ribosomal RNA small subunit methyltransferase G (240 aa).

Residues glycine 78, phenylalanine 83, 129–130 (AE), and arginine 147 each bind S-adenosyl-L-methionine. The interval 218 to 240 (RRQTSKKYPRKPGTPNKSPLLEN) is disordered.

It belongs to the methyltransferase superfamily. RNA methyltransferase RsmG family.

Its subcellular location is the cytoplasm. In terms of biological role, specifically methylates the N7 position of guanine in position 535 of 16S rRNA. The polypeptide is Ribosomal RNA small subunit methyltransferase G (Staphylococcus haemolyticus (strain JCSC1435)).